Consider the following 465-residue polypeptide: Azaphilone cluster-specific transcription factor azaR (465 aa).

Over residues 1–16 (MSDSRTTTTKNNTTNH) the composition is skewed to low complexity. The interval 1–25 (MSDSRTTTTKNNTTNHKTSRQGPGS) is disordered. Residues 27-53 (CEECRRRKLRCDRQPQCQNCVDAGVYC) constitute a DNA-binding region (zn(2)-C6 fungal-type).

It localises to the nucleus. Functionally, transcription factor that regulates the expression of the gene cluster that mediates the biosynthesis of azaphilones, a class of fungal metabolites characterized by a highly oxygenated pyrano-quinone bicyclic core and exhibiting a broad range of bioactivities. This Aspergillus niger (strain ATCC 1015 / CBS 113.46 / FGSC A1144 / LSHB Ac4 / NCTC 3858a / NRRL 328 / USDA 3528.7) protein is Azaphilone cluster-specific transcription factor azaR.